Consider the following 61-residue polypeptide: Small ribosomal subunit protein uS14 (61 aa).

Zn(2+) contacts are provided by cysteine 24, cysteine 27, cysteine 40, and cysteine 43.

It belongs to the universal ribosomal protein uS14 family. Zinc-binding uS14 subfamily. As to quaternary structure, part of the 30S ribosomal subunit. Contacts proteins S3 and S10. Requires Zn(2+) as cofactor.

In terms of biological role, binds 16S rRNA, required for the assembly of 30S particles and may also be responsible for determining the conformation of the 16S rRNA at the A site. In Bacillus anthracis (strain A0248), this protein is Small ribosomal subunit protein uS14.